Here is a 548-residue protein sequence, read N- to C-terminus: 2-succinyl-5-enolpyruvyl-6-hydroxy-3-cyclohexene-1-carboxylate synthase (548 aa).

It belongs to the TPP enzyme family. MenD subfamily. In terms of assembly, homodimer. Requires Mg(2+) as cofactor. Mn(2+) is required as a cofactor. Thiamine diphosphate serves as cofactor.

It catalyses the reaction isochorismate + 2-oxoglutarate + H(+) = 5-enolpyruvoyl-6-hydroxy-2-succinyl-cyclohex-3-ene-1-carboxylate + CO2. It functions in the pathway quinol/quinone metabolism; 1,4-dihydroxy-2-naphthoate biosynthesis; 1,4-dihydroxy-2-naphthoate from chorismate: step 2/7. Its pathway is quinol/quinone metabolism; menaquinone biosynthesis. Functionally, catalyzes the thiamine diphosphate-dependent decarboxylation of 2-oxoglutarate and the subsequent addition of the resulting succinic semialdehyde-thiamine pyrophosphate anion to isochorismate to yield 2-succinyl-5-enolpyruvyl-6-hydroxy-3-cyclohexene-1-carboxylate (SEPHCHC). This chain is 2-succinyl-5-enolpyruvyl-6-hydroxy-3-cyclohexene-1-carboxylate synthase, found in Mycobacterium marinum (strain ATCC BAA-535 / M).